Reading from the N-terminus, the 378-residue chain is Ribosomal RNA large subunit methyltransferase G (378 aa).

It belongs to the methyltransferase superfamily. RlmG family.

The protein localises to the cytoplasm. The catalysed reaction is guanosine(1835) in 23S rRNA + S-adenosyl-L-methionine = N(2)-methylguanosine(1835) in 23S rRNA + S-adenosyl-L-homocysteine + H(+). Specifically methylates the guanine in position 1835 (m2G1835) of 23S rRNA. This Escherichia coli (strain ATCC 8739 / DSM 1576 / NBRC 3972 / NCIMB 8545 / WDCM 00012 / Crooks) protein is Ribosomal RNA large subunit methyltransferase G.